The following is a 457-amino-acid chain: G-protein coupled receptor 135 (457 aa).

A disordered region spans residues 1-27; that stretch reads MEEQARPPSRPAASATLPGSAHPGGAA. Residues 1–64 are Extracellular-facing; the sequence is MEEQARPPSR…EAAGSRGPAP (64 aa). Asn-47 carries an N-linked (GlcNAc...) asparagine glycan. A helical membrane pass occupies residues 65–85; that stretch reads LLWHGAAVAAQALVLLLIFLL. Over 86–109 the chain is Cytoplasmic; sequence SSLGNCAVMGVIVKHRQLRTVTNA. A helical transmembrane segment spans residues 110-130; that stretch reads FILSLSLSDLLTALLCLPAAF. The Extracellular segment spans residues 131 to 156; that stretch reads LDLFAPPGDSGPWRSFCAASRFFSSC. Residues 157-177 traverse the membrane as a helical segment; that stretch reads FGIVSTFSVALISLDRYCAIV. Residues 178 to 189 lie on the Cytoplasmic side of the membrane; that stretch reads RPPRDKLGRRRA. Residues 190–210 traverse the membrane as a helical segment; it reads LQLLAGAWLAALGFSLPWELL. The Extracellular segment spans residues 211-235; it reads RAPREPPTPQSFHRCLYRTSPDPAQ. Residues 236–256 form a helical membrane-spanning segment; it reads LGAAYSVGLVVACYLLPFLLM. The Cytoplasmic portion of the chain corresponds to 257–295; it reads CFCRYHICKTVRLSDVRVRPMTTYARVLRFFSEVRTATT. A helical membrane pass occupies residues 296–316; the sequence is VLIMIVFVICCWGPYCFLVLL. At 317–329 the chain is on the extracellular side; sequence AATRQGQTTQAPS. Residues 330–350 traverse the membrane as a helical segment; it reads LLNVAAVWLTWANGAINPVIY. The Cytoplasmic segment spans residues 351–457; sequence AIRNPNISMF…HKSETRDSSI (107 aa).

This sequence belongs to the G-protein coupled receptor 1 family. In terms of assembly, interacts with MTNR1B. Interacts with ARRB1 and ARRB2 in a spontaneous and agonist-independent manner; leading to the internalization of GPR135 in the endosomal compartment.

The protein localises to the cell membrane. It localises to the endosome membrane. Orphan receptor. Has spontaneous activity for beta-arrestin recruitment. Shows a reciprocal regulatory interaction with the melatonin receptor MTNR1B most likely through receptor heteromerization. In Rattus norvegicus (Rat), this protein is G-protein coupled receptor 135 (Gpr135).